The sequence spans 343 residues: NADH-cytochrome b5 reductase 2 (343 aa).

The helical transmembrane segment at 41–61 threads the bilayer; it reads ILLGAAAVGLAGAGAYFFSGA. The region spanning 92-197 is the FAD-binding FR-type domain; the sequence is QGWLSLKLEE…KGPLPKYPWE (106 aa). Residue 200 to 235 participates in FAD binding; it reads KHKHIALVAGGTGITPMYQLIRAIFNNPDDKTKVTL.

The protein belongs to the flavoprotein pyridine nucleotide cytochrome reductase family. The cofactor is FAD.

Its subcellular location is the mitochondrion outer membrane. It catalyses the reaction 2 Fe(III)-[cytochrome b5] + NADH = 2 Fe(II)-[cytochrome b5] + NAD(+) + H(+). Functionally, may mediate the reduction of outer membrane cytochrome b5. In Neurospora crassa (strain ATCC 24698 / 74-OR23-1A / CBS 708.71 / DSM 1257 / FGSC 987), this protein is NADH-cytochrome b5 reductase 2 (mcr-1).